Consider the following 109-residue polypeptide: Photosystem II reaction center Psb28 protein (109 aa).

It belongs to the Psb28 family. Part of the photosystem II complex.

The protein resides in the plastid. It is found in the chloroplast thylakoid membrane. This Cyanidioschyzon merolae (strain NIES-3377 / 10D) (Unicellular red alga) protein is Photosystem II reaction center Psb28 protein.